A 268-amino-acid chain; its full sequence is Universal stress protein MT3220 (268 aa).

ATP contacts are provided by residues Gly-13, 107 to 113 (GSVGLDH), Arg-117, and 120 to 121 (SV).

This sequence belongs to the universal stress protein A family.

This is Universal stress protein MT3220 from Mycobacterium tuberculosis (strain CDC 1551 / Oshkosh).